The chain runs to 478 residues: Dynein regulatory complex subunit 4 (478 aa).

A compositionally biased stretch (basic residues) spans 1–12 (MAPKKKGKKGKA). Residues 1–33 (MAPKKKGKKGKAKGTPIVDGLAPEDMSKEQVEE) are disordered. Residues 1 to 114 (MAPKKKGKKG…LLYEHQNNLT (114 aa)) form a regulates microtubule-binding region. Residues 115–258 (EMKAEGTVVM…NSLKEQMEDM (144 aa)) form a microtubule-binding region. Residues 242-427 (LNNLALINSL…KDLQYELAQV (186 aa)) are a coiled coil. An interaction with SMO region spans residues 357-478 (QQKTGFKNLV…GPAGLVGTPT (122 aa)).

It belongs to the DRC4 family. Component of the nexin-dynein regulatory complex (N-DRC). Interacts with microtubules. Interacts with SMO. Interacts (via coiled-coil domains) with RAB3B (in GTP-bound form). Interacts with DRC1. Interacts with DRC7. Expressed in respiratory epithelial cells (at protein level). Expressed in the heart, skeletal muscle, pancreas, liver, brain, trachea and lung. Weakly or not expressed in placenta and kidney.

It is found in the cytoplasm. Its subcellular location is the cytoskeleton. It localises to the cell projection. The protein resides in the cilium. The protein localises to the flagellum. It is found in the cilium axoneme. Its subcellular location is the cilium basal body. It localises to the golgi apparatus. The protein resides in the flagellum axoneme. Functionally, component of the nexin-dynein regulatory complex (N-DRC), a key regulator of ciliary/flagellar motility which maintains the alignment and integrity of the distal axoneme and regulates microtubule sliding in motile axonemes. Plays an important role in the assembly of the N-DRC linker. Plays dual roles at both the primary (or non-motile) cilia to regulate hedgehog signaling and in motile cilia to coordinate cilia movement. Required for proper motile cilia functioning. Positively regulates ciliary smoothened (SMO)-dependent Hedgehog (Hh) signaling pathway by facilitating the trafficking of SMO into the cilium and the stimulation of SMO activity in a GRK2-dependent manner. This Homo sapiens (Human) protein is Dynein regulatory complex subunit 4 (GAS8).